We begin with the raw amino-acid sequence, 335 residues long: Acetyl-coenzyme A carboxylase carboxyl transferase subunit alpha (335 aa).

One can recognise a CoA carboxyltransferase C-terminal domain in the interval 40-294; the sequence is QLETLATRRR…KGAIEKHLNE (255 aa).

This sequence belongs to the AccA family. In terms of assembly, acetyl-CoA carboxylase is a heterohexamer composed of biotin carboxyl carrier protein (AccB), biotin carboxylase (AccC) and two subunits each of ACCase subunit alpha (AccA) and ACCase subunit beta (AccD).

The protein localises to the cytoplasm. It carries out the reaction N(6)-carboxybiotinyl-L-lysyl-[protein] + acetyl-CoA = N(6)-biotinyl-L-lysyl-[protein] + malonyl-CoA. It functions in the pathway lipid metabolism; malonyl-CoA biosynthesis; malonyl-CoA from acetyl-CoA: step 1/1. In terms of biological role, component of the acetyl coenzyme A carboxylase (ACC) complex. First, biotin carboxylase catalyzes the carboxylation of biotin on its carrier protein (BCCP) and then the CO(2) group is transferred by the carboxyltransferase to acetyl-CoA to form malonyl-CoA. The chain is Acetyl-coenzyme A carboxylase carboxyl transferase subunit alpha from Prochlorococcus marinus subsp. pastoris (strain CCMP1986 / NIES-2087 / MED4).